We begin with the raw amino-acid sequence, 647 residues long: Threonine--tRNA ligase (647 aa).

A TGS domain is found at 1 to 61; it reads MIKITFPDGA…EEDGSIEIVT (61 aa). Residues 240–538 form a catalytic region; that stretch reads DHRKLGKELD…LIETYKGAFP (299 aa). The Zn(2+) site is built by C334, H385, and H515.

This sequence belongs to the class-II aminoacyl-tRNA synthetase family. As to quaternary structure, homodimer. Requires Zn(2+) as cofactor.

It localises to the cytoplasm. It carries out the reaction tRNA(Thr) + L-threonine + ATP = L-threonyl-tRNA(Thr) + AMP + diphosphate + H(+). Functionally, catalyzes the attachment of threonine to tRNA(Thr) in a two-step reaction: L-threonine is first activated by ATP to form Thr-AMP and then transferred to the acceptor end of tRNA(Thr). Also edits incorrectly charged L-seryl-tRNA(Thr). This chain is Threonine--tRNA ligase, found in Streptococcus pyogenes serotype M1.